We begin with the raw amino-acid sequence, 2296 residues long: Protein Ycf2 (2296 aa).

Position 1650–1657 (1650–1657) interacts with ATP; sequence GSIGIGRS.

Belongs to the Ycf2 family.

It localises to the plastid. It is found in the chloroplast stroma. Its function is as follows. Probable ATPase of unknown function. Its presence in a non-photosynthetic plant (Epifagus virginiana) and experiments in tobacco indicate that it has an essential function which is probably not related to photosynthesis. The sequence is that of Protein Ycf2 from Arabis hirsuta (Hairy rock-cress).